We begin with the raw amino-acid sequence, 149 residues long: Putative pre-16S rRNA nuclease (149 aa).

It belongs to the YqgF nuclease family.

It is found in the cytoplasm. Its function is as follows. Could be a nuclease involved in processing of the 5'-end of pre-16S rRNA. The chain is Putative pre-16S rRNA nuclease from Burkholderia lata (strain ATCC 17760 / DSM 23089 / LMG 22485 / NCIMB 9086 / R18194 / 383).